The sequence spans 262 residues: Acyl-[acyl-carrier-protein]--UDP-N-acetylglucosamine O-acyltransferase (262 aa).

This sequence belongs to the transferase hexapeptide repeat family. LpxA subfamily. Homotrimer.

It is found in the cytoplasm. It catalyses the reaction a (3R)-hydroxyacyl-[ACP] + UDP-N-acetyl-alpha-D-glucosamine = a UDP-3-O-[(3R)-3-hydroxyacyl]-N-acetyl-alpha-D-glucosamine + holo-[ACP]. It functions in the pathway glycolipid biosynthesis; lipid IV(A) biosynthesis; lipid IV(A) from (3R)-3-hydroxytetradecanoyl-[acyl-carrier-protein] and UDP-N-acetyl-alpha-D-glucosamine: step 1/6. Functionally, involved in the biosynthesis of lipid A, a phosphorylated glycolipid that anchors the lipopolysaccharide to the outer membrane of the cell. The sequence is that of Acyl-[acyl-carrier-protein]--UDP-N-acetylglucosamine O-acyltransferase from Pectobacterium carotovorum subsp. carotovorum (strain PC1).